The sequence spans 74 residues: Conotoxin AbVIH (74 aa).

An N-terminal signal peptide occupies residues 1–17 (VLIIAVLFLTACQLTTA). Residues 18–40 (ETSSRGKQKHRALRSTDKDSRMT) constitute a propeptide that is removed on maturation. Residues 19-40 (TSSRGKQKHRALRSTDKDSRMT) form a disordered region. Intrachain disulfides connect Cys43–Cys57, Cys50–Cys61, and Cys56–Cys68.

It belongs to the conotoxin O1 superfamily. As to expression, expressed by the venom duct.

The protein localises to the secreted. In Conus abbreviatus (Abbreviated cone), this protein is Conotoxin AbVIH.